Here is a 412-residue protein sequence, read N- to C-terminus: Burnettramic acids biosynthesis cluster protein E (412 aa).

3 disordered regions span residues 1–66 (MAIA…KKIR), 308–342 (RNPTSPLAAPPRRGFTSKLADPNDDTNKSPISLAT), and 386–412 (SRAESIMATEATTEPSVQSDDAEAAKG). Residues 36-58 (EDEQWALDELQDELCQEEPSDSE) are compositionally biased toward acidic residues. The segment covering 395-404 (EATTEPSVQS) has biased composition (polar residues).

It functions in the pathway mycotoxin biosynthesis. Functionally, part of the gene cluster that mediates the biosynthesis of burnettramic acids, an unusual class of bolaamphiphilic pyrrolizidinediones that display potent antibacterial, antifungal, and cytotoxic activities. The first step of the biosynthesis of burnettramic acids is the hydroxylation of proline by the proline hydroxylase buaE to generate 4-hydroxyproline. The PKS-NRPS buaA and trans-enoyl reductase buaC construct the highly reduced polyketide chain, and the condensation (C) domain of buaA then catalyzes the amide bond formation with the activated 4-hydroxyproline. This is followed by the R domain releasing the nascent polyketide-peptide directly via a Dieckmann condensation to afford a tetramic acid fused to the hydroxyproline, generating the bicyclic pyrrolidinedione moiety. The cytochrome P450 monooxygenases buaD and buaG are likely responsible for the multiple hydroxylations on the polyketide chain and its terminus, although in the heterologous context, buaD does not appear to be required. Therefore, while buaG may be a multifunctional cytochrome P450 monooxygenase, it cannot be ruled out that the two secondary alcohols on the polyketide chain could have an acetate origin. Finally, the glycosyltransferase buaB transfers beta-D-mannose to the aglycone burnettramic acid A to form burnettramic acid A. Burnettramic acid B is a minor cis-pyrrolizidine epimer of burnettramic acid A and it is likely that small amounts of it form naturally in acidic environments. The role of the uncharacterized protein buaF in the biosynthesis of burnettramic acids has still to be determined. The polypeptide is Burnettramic acids biosynthesis cluster protein E (Petromyces alliaceus (Aspergillus alliaceus)).